The sequence spans 166 residues: Urease accessory protein UreE (166 aa).

This sequence belongs to the UreE family.

The protein localises to the cytoplasm. Its function is as follows. Involved in urease metallocenter assembly. Binds nickel. Probably functions as a nickel donor during metallocenter assembly. This Pseudomonas fluorescens (strain Pf0-1) protein is Urease accessory protein UreE.